A 130-amino-acid chain; its full sequence is Small ribosomal subunit protein uS8 (130 aa).

Belongs to the universal ribosomal protein uS8 family. As to quaternary structure, part of the 30S ribosomal subunit. Contacts proteins S5 and S12.

One of the primary rRNA binding proteins, it binds directly to 16S rRNA central domain where it helps coordinate assembly of the platform of the 30S subunit. The chain is Small ribosomal subunit protein uS8 from Shigella boydii serotype 18 (strain CDC 3083-94 / BS512).